A 56-amino-acid chain; its full sequence is Small ribosomal subunit protein uS14 (56 aa).

Positions 21, 24, 39, and 42 each coordinate Zn(2+).

It belongs to the universal ribosomal protein uS14 family. Component of the 40S small ribosomal subunit. The cofactor is Zn(2+).

It localises to the cytoplasm. It is found in the cytosol. The protein localises to the rough endoplasmic reticulum. This Drosophila melanogaster (Fruit fly) protein is Small ribosomal subunit protein uS14 (RpS29).